A 350-amino-acid chain; its full sequence is Neutral protease 2 homolog SNOG_10522 (350 aa).

The N-terminal stretch at 1–18 (MKVSSQLAVAALASFATA) is a signal peptide. The propeptide occupies 19-180 (ASVDVHKRET…AKALNKRTAI (162 aa)). 2 cysteine pairs are disulfide-bonded: Cys184/Cys251 and Cys258/Cys276. His301 is a Zn(2+) binding site. Glu302 is a catalytic residue. His305 and Asp316 together coordinate Zn(2+).

The protein belongs to the peptidase M35 family. Zn(2+) is required as a cofactor.

Its subcellular location is the secreted. The catalysed reaction is Preferential cleavage of bonds with hydrophobic residues in P1'. Also 3-Asn-|-Gln-4 and 8-Gly-|-Ser-9 bonds in insulin B chain.. Functionally, secreted metalloproteinase that allows assimilation of proteinaceous substrates. Shows high activities on basic nuclear substrates such as histone and protamine. The chain is Neutral protease 2 homolog SNOG_10522 from Phaeosphaeria nodorum (strain SN15 / ATCC MYA-4574 / FGSC 10173) (Glume blotch fungus).